The chain runs to 581 residues: Coiled-coil domain-containing protein 102A (581 aa).

4 disordered regions span residues 1 to 61 (MNHT…GLGC), 156 to 219 (QRVR…IGTD), 496 to 517 (QAEDELDEAHNQTRKLQRSLDE), and 534 to 581 (SRLR…LQIP). Positions 39 to 59 (TPSPSGGTPSSSPPLLLSPGL) are enriched in low complexity. The stretch at 70-164 (REELRLRELE…AQRVRAEQSS (95 aa)) forms a coiled coil. The segment covering 161–184 (EQSSPENASTAPESISSTASTHSN) has biased composition (polar residues). Positions 185 to 202 (QPREAEIKQDNQDEEGVR) are enriched in basic and acidic residues. Residues 270-541 (AALEEDTSKL…LQSRLRRQQN (272 aa)) adopt a coiled-coil conformation. The span at 559 to 581 (EDADGPPSDPDEDEEEELQLQIP) shows a compositional bias: acidic residues.

This is Coiled-coil domain-containing protein 102A (ccdc102a) from Danio rerio (Zebrafish).